We begin with the raw amino-acid sequence, 509 residues long: tRNA-2-methylthio-N(6)-dimethylallyladenosine synthase (509 aa).

Residues 1–15 show a composition bias toward polar residues; sequence MNEQQRLASQQANSS. Residues 1-25 are disordered; it reads MNEQQRLASQQANSSTKKEEKDYSK. Residues 16–25 show a composition bias toward basic and acidic residues; sequence TKKEEKDYSK. The MTTase N-terminal domain occupies 66 to 184; the sequence is RKFYIRTYGC…LPYILKDAMF (119 aa). Residues C75, C111, C145, C221, C225, and C228 each contribute to the [4Fe-4S] cluster site. The Radical SAM core domain occupies 207–437; it reads RRGDIKAWVN…NTLVNTLAIE (231 aa). A TRAM domain is found at 440 to 503; that stretch reads SRYKGQIVEV…TWSLNGELVE (64 aa).

It belongs to the methylthiotransferase family. MiaB subfamily. Monomer. [4Fe-4S] cluster is required as a cofactor.

It localises to the cytoplasm. The enzyme catalyses N(6)-dimethylallyladenosine(37) in tRNA + (sulfur carrier)-SH + AH2 + 2 S-adenosyl-L-methionine = 2-methylsulfanyl-N(6)-dimethylallyladenosine(37) in tRNA + (sulfur carrier)-H + 5'-deoxyadenosine + L-methionine + A + S-adenosyl-L-homocysteine + 2 H(+). Its function is as follows. Catalyzes the methylthiolation of N6-(dimethylallyl)adenosine (i(6)A), leading to the formation of 2-methylthio-N6-(dimethylallyl)adenosine (ms(2)i(6)A) at position 37 in tRNAs that read codons beginning with uridine. The chain is tRNA-2-methylthio-N(6)-dimethylallyladenosine synthase from Bacillus cereus (strain B4264).